The chain runs to 182 residues: ATP-dependent protease subunit HslV (182 aa).

T2 is an active-site residue. Residues G157, C160, and T163 each coordinate Na(+).

This sequence belongs to the peptidase T1B family. HslV subfamily. A double ring-shaped homohexamer of HslV is capped on each side by a ring-shaped HslU homohexamer. The assembly of the HslU/HslV complex is dependent on binding of ATP.

Its subcellular location is the cytoplasm. The enzyme catalyses ATP-dependent cleavage of peptide bonds with broad specificity.. Its activity is regulated as follows. Allosterically activated by HslU binding. Protease subunit of a proteasome-like degradation complex believed to be a general protein degrading machinery. The sequence is that of ATP-dependent protease subunit HslV from Vibrio atlanticus (strain LGP32) (Vibrio splendidus (strain Mel32)).